A 176-amino-acid chain; its full sequence is RNA pyrophosphohydrolase (176 aa).

Residues 6 to 149 (GYRPNVGIVI…KRDVYRRVMK (144 aa)) form the Nudix hydrolase domain. The short motif at 38–59 (GGINPGESPEQAMYRELFEEVG) is the Nudix box element.

This sequence belongs to the Nudix hydrolase family. RppH subfamily. A divalent metal cation serves as cofactor.

Accelerates the degradation of transcripts by removing pyrophosphate from the 5'-end of triphosphorylated RNA, leading to a more labile monophosphorylated state that can stimulate subsequent ribonuclease cleavage. The chain is RNA pyrophosphohydrolase from Proteus mirabilis (strain HI4320).